We begin with the raw amino-acid sequence, 641 residues long: Macrolide export ATP-binding/permease protein MacB (641 aa).

The ABC transporter domain occupies 2-236 (IFLKNICKNI…LTLKTMSKEK (235 aa)). 34-41 (GQSGSGKT) contributes to the ATP binding site. A run of 4 helical transmembrane segments spans residues 265-285 (ILTM…VALG), 519-539 (ACVA…IMLV), 571-591 (MICT…IFAF), and 604-624 (AYSV…FGFF).

This sequence belongs to the ABC transporter superfamily. Macrolide exporter (TC 3.A.1.122) family. Homodimer.

It is found in the cell inner membrane. Functionally, non-canonical ABC transporter that contains transmembrane domains (TMD), which form a pore in the inner membrane, and an ATP-binding domain (NBD), which is responsible for energy generation. Confers resistance against macrolides. The sequence is that of Macrolide export ATP-binding/permease protein MacB from Campylobacter jejuni subsp. jejuni serotype O:23/36 (strain 81-176).